A 279-amino-acid chain; its full sequence is Osmoprotective compounds uptake permease protein GgtC (279 aa).

7 helical membrane-spanning segments follow: residues 7-27, 58-78, 90-110, 120-140, 146-166, 202-222, and 247-267; these read LLFL…LSFF, LWLV…AVLV, IIFL…KFVY, IGLL…WLVE, FALI…ILSA, LLVV…IVFV, and FGRG…VMIT. The ABC transmembrane type-1 domain occupies 53 to 270; it reads FRNNLLWLVL…IVPVMITNIR (218 aa).

This sequence belongs to the binding-protein-dependent transport system permease family. The complex is composed of two ATP-binding proteins (GgtA), two transmembrane proteins (GgtC and GgtD) and a solute-binding protein (GgtB).

It localises to the cell membrane. In terms of biological role, part of the ABC transporter complex GgtABCD involved in the uptake of the osmoprotective compounds glucosylglycerol (GG), sucrose and trehalose. Responsible for the translocation of the substrate across the membrane. The chain is Osmoprotective compounds uptake permease protein GgtC from Synechocystis sp. (strain ATCC 27184 / PCC 6803 / Kazusa).